Reading from the N-terminus, the 424-residue chain is Tyrosine--tRNA ligase (424 aa).

Y37 contributes to the L-tyrosine binding site. The short motif at 42–51 (PTADSLHLGH) is the 'HIGH' region element. K144 is modified (N6-acetyllysine). Y175 and Q179 together coordinate L-tyrosine. Residues 235–239 (KFGKT) carry the 'KMSKS' region motif. K238 lines the ATP pocket. In terms of domain architecture, S4 RNA-binding spans 357–414 (ADLMQALVDSELQPSRGQARKTIASNAITINGEKQSDPEYFFKEEDRLFGRFTLLRRG).

The protein belongs to the class-I aminoacyl-tRNA synthetase family. TyrS type 1 subfamily. Homodimer.

The protein localises to the cytoplasm. The enzyme catalyses tRNA(Tyr) + L-tyrosine + ATP = L-tyrosyl-tRNA(Tyr) + AMP + diphosphate + H(+). In terms of biological role, catalyzes the attachment of tyrosine to tRNA(Tyr) in a two-step reaction: tyrosine is first activated by ATP to form Tyr-AMP and then transferred to the acceptor end of tRNA(Tyr). The protein is Tyrosine--tRNA ligase of Escherichia coli O127:H6 (strain E2348/69 / EPEC).